Reading from the N-terminus, the 1436-residue chain is DNA polymerase III PolC-type (1436 aa).

The Exonuclease domain occupies 420 to 576 (YVVFDVETTG…YDTEATAYIF (157 aa)).

It belongs to the DNA polymerase type-C family. PolC subfamily.

It localises to the cytoplasm. It catalyses the reaction DNA(n) + a 2'-deoxyribonucleoside 5'-triphosphate = DNA(n+1) + diphosphate. Functionally, required for replicative DNA synthesis. This DNA polymerase also exhibits 3' to 5' exonuclease activity. In Staphylococcus aureus (strain MW2), this protein is DNA polymerase III PolC-type.